Here is a 203-residue protein sequence, read N- to C-terminus: Small ribosomal subunit protein uS4 (203 aa).

In terms of domain architecture, S4 RNA-binding spans Q93–Q153.

This sequence belongs to the universal ribosomal protein uS4 family. In terms of assembly, part of the 30S ribosomal subunit. Contacts protein S5. The interaction surface between S4 and S5 is involved in control of translational fidelity.

One of the primary rRNA binding proteins, it binds directly to 16S rRNA where it nucleates assembly of the body of the 30S subunit. Functionally, with S5 and S12 plays an important role in translational accuracy. This is Small ribosomal subunit protein uS4 from Leuconostoc mesenteroides subsp. mesenteroides (strain ATCC 8293 / DSM 20343 / BCRC 11652 / CCM 1803 / JCM 6124 / NCDO 523 / NBRC 100496 / NCIMB 8023 / NCTC 12954 / NRRL B-1118 / 37Y).